The primary structure comprises 390 residues: Bifunctional enzyme IspD/IspF (390 aa).

The 2-C-methyl-D-erythritol 4-phosphate cytidylyltransferase stretch occupies residues 1–229 (MAAGRGERAG…RQDHAVFPDI (229 aa)). The interval 230 to 390 (RTGNGYDVHS…TVIYPGEVPE (161 aa)) is 2-C-methyl-D-erythritol 2,4-cyclodiphosphate synthase. 2 residues coordinate a divalent metal cation: D236 and H238. Residues 236–238 (DVH) and 262–263 (HS) each bind 4-CDP-2-C-methyl-D-erythritol 2-phosphate. An a divalent metal cation-binding site is contributed by H270. 4-CDP-2-C-methyl-D-erythritol 2-phosphate is bound by residues 284–286 (DIG), 360–363 (TTNE), F367, and R370.

It in the N-terminal section; belongs to the IspD/TarI cytidylyltransferase family. IspD subfamily. The protein in the C-terminal section; belongs to the IspF family. The cofactor is a divalent metal cation.

It catalyses the reaction 2-C-methyl-D-erythritol 4-phosphate + CTP + H(+) = 4-CDP-2-C-methyl-D-erythritol + diphosphate. The enzyme catalyses 4-CDP-2-C-methyl-D-erythritol 2-phosphate = 2-C-methyl-D-erythritol 2,4-cyclic diphosphate + CMP. The protein operates within isoprenoid biosynthesis; isopentenyl diphosphate biosynthesis via DXP pathway; isopentenyl diphosphate from 1-deoxy-D-xylulose 5-phosphate: step 2/6. Its pathway is isoprenoid biosynthesis; isopentenyl diphosphate biosynthesis via DXP pathway; isopentenyl diphosphate from 1-deoxy-D-xylulose 5-phosphate: step 4/6. Functionally, bifunctional enzyme that catalyzes the formation of 4-diphosphocytidyl-2-C-methyl-D-erythritol from CTP and 2-C-methyl-D-erythritol 4-phosphate (MEP) (IspD), and catalyzes the conversion of 4-diphosphocytidyl-2-C-methyl-D-erythritol 2-phosphate (CDP-ME2P) to 2-C-methyl-D-erythritol 2,4-cyclodiphosphate (ME-CPP) with a corresponding release of cytidine 5-monophosphate (CMP) (IspF). The sequence is that of Bifunctional enzyme IspD/IspF from Brucella abortus biovar 1 (strain 9-941).